The chain runs to 55 residues: Large ribosomal subunit protein bL33 (55 aa).

It belongs to the bacterial ribosomal protein bL33 family.

The chain is Large ribosomal subunit protein bL33 from Dinoroseobacter shibae (strain DSM 16493 / NCIMB 14021 / DFL 12).